The chain runs to 264 residues: Phosphonates import ATP-binding protein PhnC (264 aa).

Residues 3–246 enclose the ABC transporter domain; it reads IRLQEAGLRH…MLDALYANEQ (244 aa). An ATP-binding site is contributed by 35–42; the sequence is GPSGAGKS.

This sequence belongs to the ABC transporter superfamily. Phosphonates importer (TC 3.A.1.9.1) family. The complex is composed of two ATP-binding proteins (PhnC), two transmembrane proteins (PhnE) and a solute-binding protein (PhnD).

The protein resides in the cell inner membrane. The enzyme catalyses phosphonate(out) + ATP + H2O = phosphonate(in) + ADP + phosphate + H(+). Functionally, part of the ABC transporter complex PhnCDE involved in phosphonates import. Responsible for energy coupling to the transport system. The protein is Phosphonates import ATP-binding protein PhnC of Pseudomonas entomophila (strain L48).